The primary structure comprises 321 residues: 4-hydroxy-2-oxoglutarate aldolase, mitochondrial (321 aa).

The transit peptide at 1 to 23 directs the protein to the mitochondrion; sequence MLGPQIWASMRQGLSRGLSRNVK. 71 to 72 lines the substrate pocket; that stretch reads ST. The Schiff-base intermediate with substrate role is filled by K190. Residues S192 and G216 each coordinate substrate.

This sequence belongs to the DapA family. Homotetramer.

Its subcellular location is the mitochondrion. The catalysed reaction is (4S)-4-hydroxy-2-oxoglutarate = glyoxylate + pyruvate. The enzyme catalyses (4R)-4-hydroxy-2-oxoglutarate = glyoxylate + pyruvate. With respect to regulation, inhibited by divalent cations. Functionally, catalyzes the final step in the metabolic pathway of hydroxyproline. The chain is 4-hydroxy-2-oxoglutarate aldolase, mitochondrial (Hoga1) from Mus musculus (Mouse).